The following is a 677-amino-acid chain: Pro-neuregulin-1, membrane-bound isoform (677 aa).

Positions 1-12 (MAEKKKVKEGKG) are enriched in basic and acidic residues. Disordered regions lie at residues 1 to 43 (MAEK…KEIK) and 78 to 106 (GAKN…ISKA). Topologically, residues 1 to 260 (MAEKKKVKEG…MEAEELYQKR (260 aa)) are extracellular. The segment covering 13–24 (RKGKGKKDRKGK) has biased composition (basic residues). One can recognise an Ig-like C2-type domain in the interval 37–132 (PKLKEIKTQS…GNDTVTVNVT (96 aa)). A disulfide bridge connects residues Cys-57 and Cys-116. Residues 78-91 (GAKNKPDSKPEHIK) are compositionally biased toward basic and acidic residues. N-linked (GlcNAc...) asparagine glycans are attached at residues Asn-124 and Asn-130. The EGF-like domain occupies 188-232 (HLIKCSDKEKTYCVNGGECYVLNGITSSNQFMCKCKPGFTGARCT). 3 disulfides stabilise this stretch: Cys-192/Cys-206, Cys-200/Cys-220, and Cys-222/Cys-231. A helical transmembrane segment spans residues 261-280 (VLTITGICIDLLVVGDMCVV). At 281–677 (DAYCKTKKQR…RKMTCKTLFI (397 aa)) the chain is on the cytoplasmic side. Residues 294-315 (NDRLRQSLRERNKNITNKDNRP) are compositionally biased toward basic and acidic residues. Disordered regions lie at residues 294-326 (NDRL…PRKN), 350-375 (ETSF…PSHS), 397-418 (SVEN…GIGG), 457-479 (VEFK…ESSL), and 503-617 (PPRL…FLSI). A compositionally biased stretch (low complexity) spans 351–375 (TSFSTSHYTSTTHHSTTVTQTPSHS). A compositionally biased stretch (polar residues) spans 397-407 (SVENSRHTSPT). The segment covering 505 to 515 (RLREKRYDRKT) has biased composition (basic and acidic residues). Over residues 568–578 (VNSRRQKRTKP) the composition is skewed to basic residues. Residues 591-600 (DSSSESSTSE) are compositionally biased toward low complexity.

This sequence belongs to the neuregulin family. Proteolytic cleavage close to the plasma membrane on the external face leads to the release of the soluble growth factor form. Post-translationally, extensive glycosylation precedes the proteolytic cleavage. Isoform alpha1 is expressed in brain and muscle. Isoform CRD is expressed in brain and spinal cord, but at very low level in muscle.

The protein resides in the cell membrane. It localises to the secreted. Direct ligand for the ERBB tyrosine kinase receptors. Induces expression of acetylcholine receptor in synaptic nuclei. This Xenopus laevis (African clawed frog) protein is Pro-neuregulin-1, membrane-bound isoform (nrg1).